The chain runs to 350 residues: Leucine-rich repeat-containing protein 58 (350 aa).

LRR repeat units follow at residues 14–34 (NLTH…NKRK), 35–56 (DVQQ…VASF), 58–80 (HLHL…LGLT), 81–102 (KLKT…KEMG), 105–125 (RLEV…QFLQ), 128–149 (TLKS…IENL), 151–173 (SLEF…ANLP), 174–195 (YLSY…LAQV), 197–218 (SLRS…ILSL), and 220–240 (HLHE…RDLT).

The polypeptide is Leucine-rich repeat-containing protein 58 (lrrc58) (Xenopus laevis (African clawed frog)).